Consider the following 240-residue polypeptide: Proteasome subunit alpha (240 aa).

The protein belongs to the peptidase T1A family. The 20S proteasome core is composed of 14 alpha and 14 beta subunits that assemble into four stacked heptameric rings, resulting in a barrel-shaped structure. The two inner rings, each composed of seven catalytic beta subunits, are sandwiched by two outer rings, each composed of seven alpha subunits. The catalytic chamber with the active sites is on the inside of the barrel. Has a gated structure, the ends of the cylinder being occluded by the N-termini of the alpha-subunits. Is capped by the proteasome-associated ATPase, ARC.

Its subcellular location is the cytoplasm. The protein operates within protein degradation; proteasomal Pup-dependent pathway. With respect to regulation, the formation of the proteasomal ATPase ARC-20S proteasome complex, likely via the docking of the C-termini of ARC into the intersubunit pockets in the alpha-rings, may trigger opening of the gate for substrate entry. Interconversion between the open-gate and close-gate conformations leads to a dynamic regulation of the 20S proteasome proteolysis activity. Component of the proteasome core, a large protease complex with broad specificity involved in protein degradation. The chain is Proteasome subunit alpha from Frankia casuarinae (strain DSM 45818 / CECT 9043 / HFP020203 / CcI3).